We begin with the raw amino-acid sequence, 323 residues long: Zinc finger protein 784 (323 aa).

The tract at residues 1–26 (MAAARPEAQSRSSPTPESRSQEPLDL) is disordered. Positions 9 to 18 (QSRSSPTPES) are enriched in polar residues. The residue at position 13 (S13) is a Phosphoserine. 6 C2H2-type zinc fingers span residues 65–87 (FHCALCPAAFRLVSELLFHEHGH), 101–123 (SRCHVCGHSCPGPASLRAHYSLH), 129–151 (YRCALCPRAFKALAPLLRHQHRH), 196–218 (FACRFCAKPFRRSSDMRDHERVH), 224–246 (YHCGICGKGFTQSSVLSGHARIH), and 252–274 (FRCTLCDRTFNNSSNFRKHQRTH). The disordered stretch occupies residues 269–323 (KHQRTHFHGPGPGLGDSGGQLGSSAAEGSGSGCGVGDPAEEGRGETAKVKVEADQ). Residues 278-289 (PGPGLGDSGGQL) show a composition bias toward gly residues. The segment covering 308 to 323 (EEGRGETAKVKVEADQ) has biased composition (basic and acidic residues). Residue K318 forms a Glycyl lysine isopeptide (Lys-Gly) (interchain with G-Cter in SUMO2) linkage.

Belongs to the krueppel C2H2-type zinc-finger protein family.

It is found in the nucleus. In terms of biological role, may be involved in transcriptional regulation. This is Zinc finger protein 784 (ZNF784) from Homo sapiens (Human).